Here is a 973-residue protein sequence, read N- to C-terminus: Probable outer membrane protein pmp13 (973 aa).

An N-terminal signal peptide occupies residues 1-24 (MKTSIRKFLISTTLAPCFASTAFT). The segment covering 284–293 (QNNTASPQNS) has biased composition (polar residues). Positions 284–303 (QNNTASPQNSLPAPTPPPTP) are disordered. The region spanning 691–973 (EDVPGKQLSI…TLDIGSKLRF (283 aa)) is the Autotransporter domain.

The protein belongs to the PMP outer membrane protein family.

The protein resides in the secreted. The protein localises to the cell wall. It localises to the cell outer membrane. This Chlamydia pneumoniae (Chlamydophila pneumoniae) protein is Probable outer membrane protein pmp13 (pmp13).